The sequence spans 463 residues: Glutamate--tRNA ligase 2 (463 aa).

The 'HIGH' region signature appears at 11–21; it reads PSPTGYLHIGG. The short motif at 240–244 is the 'KMSKS' region element; the sequence is KLSKR. ATP is bound at residue Lys-243.

This sequence belongs to the class-I aminoacyl-tRNA synthetase family. Glutamate--tRNA ligase type 1 subfamily. Monomer.

The protein localises to the cytoplasm. It catalyses the reaction tRNA(Glu) + L-glutamate + ATP = L-glutamyl-tRNA(Glu) + AMP + diphosphate. In terms of biological role, catalyzes the attachment of glutamate to tRNA(Glu) in a two-step reaction: glutamate is first activated by ATP to form Glu-AMP and then transferred to the acceptor end of tRNA(Glu). The protein is Glutamate--tRNA ligase 2 of Campylobacter jejuni subsp. jejuni serotype O:2 (strain ATCC 700819 / NCTC 11168).